Consider the following 322-residue polypeptide: Cysteine protease YopT (322 aa).

Catalysis depends on residues C139, H258, and D274.

The protein belongs to the peptidase C58 family. Interacts with human ARHA.

It localises to the secreted. Functionally, cysteine protease, which is translocated into infected cells and plays a central role in pathogenesis by cleaving the C-terminus end of the human small GTPase RhoA/ARHA, a regulator of cytoskeleton. Once cleaved, ARHA loses its lipid modification, and is released from the cell membrane, leading to the subsequent disruption of actin cytoskeleton of the host cell. This Yersinia pestis protein is Cysteine protease YopT (yopT).